A 141-amino-acid chain; its full sequence is ATP synthase epsilon chain (141 aa).

The protein belongs to the ATPase epsilon chain family. As to quaternary structure, F-type ATPases have 2 components, CF(1) - the catalytic core - and CF(0) - the membrane proton channel. CF(1) has five subunits: alpha(3), beta(3), gamma(1), delta(1), epsilon(1). CF(0) has three main subunits: a, b and c.

Its subcellular location is the cell inner membrane. Produces ATP from ADP in the presence of a proton gradient across the membrane. The chain is ATP synthase epsilon chain from Burkholderia thailandensis (strain ATCC 700388 / DSM 13276 / CCUG 48851 / CIP 106301 / E264).